We begin with the raw amino-acid sequence, 301 residues long: N-acetylmuramic acid 6-phosphate etherase (301 aa).

In terms of domain architecture, SIS spans 57-220 (IAEAFRQGGR…TTGAMIRTGK (164 aa)). The active-site Proton donor is the Glu-85. Residue Glu-116 is part of the active site.

This sequence belongs to the GCKR-like family. MurNAc-6-P etherase subfamily. Homodimer.

The enzyme catalyses N-acetyl-D-muramate 6-phosphate + H2O = N-acetyl-D-glucosamine 6-phosphate + (R)-lactate. It participates in amino-sugar metabolism; 1,6-anhydro-N-acetylmuramate degradation. The protein operates within amino-sugar metabolism; N-acetylmuramate degradation. Its pathway is cell wall biogenesis; peptidoglycan recycling. In terms of biological role, specifically catalyzes the cleavage of the D-lactyl ether substituent of MurNAc 6-phosphate, producing GlcNAc 6-phosphate and D-lactate. Together with AnmK, is also required for the utilization of anhydro-N-acetylmuramic acid (anhMurNAc) either imported from the medium or derived from its own cell wall murein, and thus plays a role in cell wall recycling. The sequence is that of N-acetylmuramic acid 6-phosphate etherase from Photorhabdus laumondii subsp. laumondii (strain DSM 15139 / CIP 105565 / TT01) (Photorhabdus luminescens subsp. laumondii).